The primary structure comprises 266 residues: MSRIAETFARLRAAGRIALMPYLTVGFPERTSTLELVPALEAAGASLFELGIPFSDPLADGTTIQRATQRALENGITIADCIATVAELRARRVAAPLLLMGYYNPLLRYGLERACAALAAAGGDGWIIPDLPLEEADDLRQLAAAHQLDLIMFIAPTTPPARISQITAQASGFLYIVSLTGVTGARQTLAGNLTDLIANVRQQTNLPLVVGFGISQPAHIAEVARIADGAIVGSALIDRLERLPPEDRVSGAAAYIRELLSAVARP.

Residues Glu-49 and Asp-60 each act as proton acceptor in the active site.

It belongs to the TrpA family. Tetramer of two alpha and two beta chains.

The catalysed reaction is (1S,2R)-1-C-(indol-3-yl)glycerol 3-phosphate + L-serine = D-glyceraldehyde 3-phosphate + L-tryptophan + H2O. It participates in amino-acid biosynthesis; L-tryptophan biosynthesis; L-tryptophan from chorismate: step 5/5. Its function is as follows. The alpha subunit is responsible for the aldol cleavage of indoleglycerol phosphate to indole and glyceraldehyde 3-phosphate. The chain is Tryptophan synthase alpha chain from Chloroflexus aurantiacus (strain ATCC 29364 / DSM 637 / Y-400-fl).